The sequence spans 243 residues: 1-(5-phosphoribosyl)-5-[(5-phosphoribosylamino)methylideneamino] imidazole-4-carboxamide isomerase (243 aa).

Aspartate 14 acts as the Proton acceptor in catalysis. The Proton donor role is filled by aspartate 135.

Belongs to the HisA/HisF family.

The protein localises to the cytoplasm. The catalysed reaction is 1-(5-phospho-beta-D-ribosyl)-5-[(5-phospho-beta-D-ribosylamino)methylideneamino]imidazole-4-carboxamide = 5-[(5-phospho-1-deoxy-D-ribulos-1-ylimino)methylamino]-1-(5-phospho-beta-D-ribosyl)imidazole-4-carboxamide. It functions in the pathway amino-acid biosynthesis; L-histidine biosynthesis; L-histidine from 5-phospho-alpha-D-ribose 1-diphosphate: step 4/9. The protein is 1-(5-phosphoribosyl)-5-[(5-phosphoribosylamino)methylideneamino] imidazole-4-carboxamide isomerase of Rubrobacter xylanophilus (strain DSM 9941 / JCM 11954 / NBRC 16129 / PRD-1).